Reading from the N-terminus, the 237-residue chain is Demethylmenaquinone methyltransferase (237 aa).

S-adenosyl-L-methionine contacts are provided by residues Thr58, Asp79, and 106-107; that span reads NA.

The protein belongs to the class I-like SAM-binding methyltransferase superfamily. MenG/UbiE family.

It carries out the reaction a 2-demethylmenaquinol + S-adenosyl-L-methionine = a menaquinol + S-adenosyl-L-homocysteine + H(+). The protein operates within quinol/quinone metabolism; menaquinone biosynthesis; menaquinol from 1,4-dihydroxy-2-naphthoate: step 2/2. Functionally, methyltransferase required for the conversion of demethylmenaquinol (DMKH2) to menaquinol (MKH2). The protein is Demethylmenaquinone methyltransferase of Anoxybacillus flavithermus (strain DSM 21510 / WK1).